The following is a 363-amino-acid chain: Phosphoserine aminotransferase (363 aa).

2 residues coordinate L-glutamate: Ser-9 and Arg-42. Residues 76-77 (AR), Trp-102, Thr-154, Asp-174, and Gln-197 contribute to the pyridoxal 5'-phosphate site. An N6-(pyridoxal phosphate)lysine modification is found at Lys-198. 240–241 (NT) lines the pyridoxal 5'-phosphate pocket.

It belongs to the class-V pyridoxal-phosphate-dependent aminotransferase family. SerC subfamily. Homodimer. The cofactor is pyridoxal 5'-phosphate.

Its subcellular location is the cytoplasm. It catalyses the reaction O-phospho-L-serine + 2-oxoglutarate = 3-phosphooxypyruvate + L-glutamate. The catalysed reaction is 4-(phosphooxy)-L-threonine + 2-oxoglutarate = (R)-3-hydroxy-2-oxo-4-phosphooxybutanoate + L-glutamate. The protein operates within amino-acid biosynthesis; L-serine biosynthesis; L-serine from 3-phospho-D-glycerate: step 2/3. It participates in cofactor biosynthesis; pyridoxine 5'-phosphate biosynthesis; pyridoxine 5'-phosphate from D-erythrose 4-phosphate: step 3/5. Catalyzes the reversible conversion of 3-phosphohydroxypyruvate to phosphoserine and of 3-hydroxy-2-oxo-4-phosphonooxybutanoate to phosphohydroxythreonine. The protein is Phosphoserine aminotransferase of Baumannia cicadellinicola subsp. Homalodisca coagulata.